A 233-amino-acid polypeptide reads, in one-letter code: Sugar fermentation stimulation protein homolog (233 aa).

The protein belongs to the SfsA family.

The sequence is that of Sugar fermentation stimulation protein homolog from Saccharophagus degradans (strain 2-40 / ATCC 43961 / DSM 17024).